The primary structure comprises 344 residues: Probable electron transfer flavoprotein subunit alpha, mitochondrial (344 aa).

284–312 contacts FAD; it reads LYIAIGVSGAVQHLAGMKDSKVIVAINND.

This sequence belongs to the ETF alpha-subunit/FixB family. As to quaternary structure, heterodimer of an alpha and a beta subunit. It depends on FAD as a cofactor.

The protein localises to the mitochondrion matrix. Its function is as follows. The electron transfer flavoprotein serves as a specific electron acceptor for several dehydrogenases, including five acyl-CoA dehydrogenases, glutaryl-CoA and sarcosine dehydrogenase. It transfers the electrons to the main mitochondrial respiratory chain via ETF-ubiquinone oxidoreductase (ETF dehydrogenase). The sequence is that of Probable electron transfer flavoprotein subunit alpha, mitochondrial (AIM45) from Saccharomyces cerevisiae (strain ATCC 204508 / S288c) (Baker's yeast).